A 519-amino-acid chain; its full sequence is Cell division cycle protein 20 homolog B (519 aa).

The tract at residues 77–106 is disordered; that stretch reads WQLSPARDPESSSSVEEGPPSHTPESLASG. Over residues 87 to 96 the composition is skewed to low complexity; that stretch reads SSSSVEEGPP. WD repeat units follow at residues 229-266, 271-310, 353-392, 399-441, 443-484, and 487-519; these read RNDYYLNTLDWSSQNLVAVALGTSVYIWNGQNHSWIEN, VCCHYVSSVTWMREGSCLAVGTSEGEVQLWDAITKKQLRN, YHKEAVCSLKWSPDGRLLSSGCNDGLLTIWPHDPGAGVQG, PQST…NIQT, STQS…RSGG, and GHRDRVLHLSLSPDQTRLFSAAADGTACVWKCC.

This sequence belongs to the WD repeat CDC20/Fizzy family. As to expression, expressed in multiciliated cells (MCCs).

The protein resides in the cytoplasm. In terms of biological role, protein regulator of centriole-deuterosome disengagement and subsequently participates in the ciliogenesis in multiciliated cells (MCCs). The protein is Cell division cycle protein 20 homolog B of Mus musculus (Mouse).